A 366-amino-acid polypeptide reads, in one-letter code: Histidinol-phosphate aminotransferase 2 (366 aa).

Over residues 1–11 the composition is skewed to polar residues; it reads MQVKDQLSSLQ. The segment at 1 to 21 is disordered; it reads MQVKDQLSSLQPYKPGKSPEQ. Lys222 bears the N6-(pyridoxal phosphate)lysine mark.

It belongs to the class-II pyridoxal-phosphate-dependent aminotransferase family. Histidinol-phosphate aminotransferase subfamily. In terms of assembly, homodimer. Pyridoxal 5'-phosphate is required as a cofactor.

The enzyme catalyses L-histidinol phosphate + 2-oxoglutarate = 3-(imidazol-4-yl)-2-oxopropyl phosphate + L-glutamate. It functions in the pathway amino-acid biosynthesis; L-histidine biosynthesis; L-histidine from 5-phospho-alpha-D-ribose 1-diphosphate: step 7/9. This Bacillus anthracis protein is Histidinol-phosphate aminotransferase 2 (hisC2).